The primary structure comprises 184 residues: GTP cyclohydrolase 1 (184 aa).

Zn(2+)-binding residues include Cys-75, His-78, and Cys-146.

This sequence belongs to the GTP cyclohydrolase I family. As to quaternary structure, toroid-shaped homodecamer, composed of two pentamers of five dimers.

The enzyme catalyses GTP + H2O = 7,8-dihydroneopterin 3'-triphosphate + formate + H(+). It participates in cofactor biosynthesis; 7,8-dihydroneopterin triphosphate biosynthesis; 7,8-dihydroneopterin triphosphate from GTP: step 1/1. In Pseudoalteromonas atlantica (strain T6c / ATCC BAA-1087), this protein is GTP cyclohydrolase 1.